Here is a 235-residue protein sequence, read N- to C-terminus: PRA1 family protein 1 (235 aa).

Polar residues predominate over residues 1-17 (MESNSNSNETMYGNPNI). Residues 1–55 (MESNSNSNETMYGNPNINMGFVDSGNSNIGNNTGSMSPPPQQQQQPQQASSTPAG) are disordered. Low complexity predominate over residues 24-48 (SGNSNIGNNTGSMSPPPQQQQQPQQ). 2 consecutive transmembrane segments (helical) span residues 144–164 (SVFF…LLFI) and 187–207 (AFLS…LVGA).

It belongs to the PRA1 family.

The protein localises to the membrane. Its function is as follows. May act as a general Rab protein regulator. This chain is PRA1 family protein 1 (prafA), found in Dictyostelium discoideum (Social amoeba).